The primary structure comprises 149 residues: Calmodulin-1 (149 aa).

Alanine 2 carries the post-translational modification N-acetylalanine. 4 EF-hand domains span residues 8 to 43 (DQIS…LGQN), 44 to 79 (PTEA…KMKD), 81 to 116 (DSEE…LGEK), and 117 to 149 (LTDE…MMAK). Positions 21, 23, 25, 27, 32, 57, 59, 61, 63, 68, 94, 96, 98, and 105 each coordinate Ca(2+). Residue lysine 116 is modified to N6,N6,N6-trimethyllysine. Aspartate 130, aspartate 132, aspartate 134, glutamine 136, and glutamate 141 together coordinate Ca(2+).

It belongs to the calmodulin family.

Calmodulin mediates the control of a large number of enzymes, ion channels and other proteins by Ca(2+). Among the enzymes to be stimulated by the calmodulin-Ca(2+) complex are a number of protein kinases and phosphatases. This Petunia hybrida (Petunia) protein is Calmodulin-1 (CAM81).